Here is a 134-residue protein sequence, read N- to C-terminus: UPF0719 transmembrane protein YshE (134 aa).

The next 4 helical transmembrane spans lie at 10-30 (VEIA…LTVF), 48-68 (AVAM…QHSI), 78-98 (IGWG…FEFL), and 114-134 (AVGF…AAGI).

Belongs to the UPF0719 family.

The protein resides in the cell membrane. This chain is UPF0719 transmembrane protein YshE (yshE), found in Bacillus subtilis (strain 168).